Consider the following 364-residue polypeptide: Dual-specificity RNA methyltransferase RlmN (364 aa).

E91 functions as the Proton acceptor in the catalytic mechanism. Residues 97–333 (ESDRGTLCIS…VTVRKTRGDD (237 aa)) enclose the Radical SAM core domain. A disulfide bond links C104 and C338. [4Fe-4S] cluster contacts are provided by C111, C115, and C118. S-adenosyl-L-methionine contacts are provided by residues 164-165 (GE), S196, 218-220 (SLH), and N295. Catalysis depends on C338, which acts as the S-methylcysteine intermediate.

The protein belongs to the radical SAM superfamily. RlmN family. [4Fe-4S] cluster is required as a cofactor.

It localises to the cytoplasm. The enzyme catalyses adenosine(2503) in 23S rRNA + 2 reduced [2Fe-2S]-[ferredoxin] + 2 S-adenosyl-L-methionine = 2-methyladenosine(2503) in 23S rRNA + 5'-deoxyadenosine + L-methionine + 2 oxidized [2Fe-2S]-[ferredoxin] + S-adenosyl-L-homocysteine. The catalysed reaction is adenosine(37) in tRNA + 2 reduced [2Fe-2S]-[ferredoxin] + 2 S-adenosyl-L-methionine = 2-methyladenosine(37) in tRNA + 5'-deoxyadenosine + L-methionine + 2 oxidized [2Fe-2S]-[ferredoxin] + S-adenosyl-L-homocysteine. Functionally, specifically methylates position 2 of adenine 2503 in 23S rRNA and position 2 of adenine 37 in tRNAs. m2A2503 modification seems to play a crucial role in the proofreading step occurring at the peptidyl transferase center and thus would serve to optimize ribosomal fidelity. The sequence is that of Dual-specificity RNA methyltransferase RlmN from Neisseria gonorrhoeae (strain ATCC 700825 / FA 1090).